Reading from the N-terminus, the 488-residue chain is pH-response regulator protein palC (488 aa).

Residues P2–V430 enclose the BRO1 domain. The tract at residues P449–F488 is disordered.

The protein belongs to the palC family.

Its function is as follows. Required for the proteolytic cleavage of the transcription factor RIM101 in response to alkaline ambient pH. The chain is pH-response regulator protein palC from Cryptococcus neoformans var. neoformans serotype D (strain B-3501A) (Filobasidiella neoformans).